Here is a 1543-residue protein sequence, read N- to C-terminus: Tubby-related protein 4 (1543 aa).

WD repeat units lie at residues 6 to 72, 73 to 115, 116 to 158, 159 to 237, 238 to 276, 277 to 334, and 335 to 372; these read EHGP…STPQ, RINF…YEGR, WSVE…SGQR, HWSS…SDDY, APPQDGPAAYPIPVQNIKPLLTVSFTSGDISLMNNYDDL, SPTV…GEHI, and FTLDTLVQRPIISICWGHRDSRLLMASGPALYVVRVEH. The region spanning 364-414 is the SOCS box domain; it reads ALYVVRVEHRVSSLQLLCQQAIASTLREDKDVSKLTLPPRLCSYLSTAFIP. Disordered stretches follow at residues 530–577 and 829–850; these read SPKI…SVGS and TKINPPPPYPGTIPAAPTTAAP. At S577 the chain carries Phosphoserine. 2 positions are modified to asymmetric dimethylarginine: R945 and R950. 3 disordered regions span residues 1004-1058, 1326-1355, and 1367-1453; these read SPRA…HTAS, VPQRTEKFGKKNRKRLDSRAEEGSVQAITE, and DFNS…ASEK. Polar residues predominate over residues 1036–1050; sequence TCSQCSGTGPSSQPG. Over residues 1329–1347 the composition is skewed to basic and acidic residues; it reads RTEKFGKKNRKRLDSRAEE. 2 positions are modified to phosphoserine: S1343 and S1374. The span at 1443–1453 shows a compositional bias: basic and acidic residues; sequence EEAKCRRASEK. The TUB stretch occupies residues 1466-1543; it reads VMANKQPLWN…ALANVTQRLK (78 aa).

Belongs to the TUB family. Expressed mainly in the brain, skeletal muscle, testis and kidney.

It localises to the cytoplasm. The protein operates within protein modification; protein ubiquitination. Functionally, may be a substrate-recognition component of a SCF-like ECS (Elongin-Cullin-SOCS-box protein) E3 ubiquitin ligase complex which mediates the ubiquitination and subsequent proteasomal degradation of target proteins. The chain is Tubby-related protein 4 (TULP4) from Homo sapiens (Human).